The following is a 144-amino-acid chain: Single-stranded DNA-binding protein 3 (144 aa).

Residues 1–103 enclose the SSB domain; the sequence is MNKVVLIGRL…IVAEEVQFLE (103 aa). The segment covering 112-134 has biased composition (polar residues); the sequence is MANDQFNNGNENGSMQLPDNNDI. Residues 112 to 144 form a disordered region; the sequence is MANDQFNNGNENGSMQLPDNNDITPIDDGDIPF.

In terms of assembly, homotetramer.

The protein is Single-stranded DNA-binding protein 3 (ssb3) of Clostridium acetobutylicum (strain ATCC 824 / DSM 792 / JCM 1419 / IAM 19013 / LMG 5710 / NBRC 13948 / NRRL B-527 / VKM B-1787 / 2291 / W).